The primary structure comprises 471 residues: Cytidine and dCMP deaminase domain-containing protein 1 (471 aa).

The tract at residues 1–27 is disordered; that stretch reads MAESNSWRSHRESDGNRSIPNGDDARN. CMP/dCMP-type deaminase domains follow at residues 57-153 and 312-460; these read LWME…LLSE and GVIR…KLNG. His99, Cys124, Cys127, and His393 together coordinate Zn(2+). The active-site Proton donor is the Glu395. Zn(2+) is bound by residues Cys421 and Cys424.

Belongs to the cytidine and deoxycytidylate deaminase family. Zn(2+) is required as a cofactor.

It catalyses the reaction 2'-deoxycytidine + H2O + H(+) = 2'-deoxyuridine + NH4(+). The enzyme catalyses cytidine + H2O + H(+) = uridine + NH4(+). Its function is as follows. Catalyzes the deamination of cytidine and deoxycytidine into uridine and deoxyuridine, respectively. This is Cytidine and dCMP deaminase domain-containing protein 1 (cdadc1) from Danio rerio (Zebrafish).